Consider the following 120-residue polypeptide: Large ribosomal subunit protein bL19 (120 aa).

Belongs to the bacterial ribosomal protein bL19 family.

Its function is as follows. This protein is located at the 30S-50S ribosomal subunit interface and may play a role in the structure and function of the aminoacyl-tRNA binding site. This Nostoc punctiforme (strain ATCC 29133 / PCC 73102) protein is Large ribosomal subunit protein bL19.